The sequence spans 277 residues: Phosphoenolpyruvate synthase regulatory protein (277 aa).

Position 157-164 (157-164 (GVSRCGKT)) interacts with ADP.

This sequence belongs to the pyruvate, phosphate/water dikinase regulatory protein family. PSRP subfamily.

The catalysed reaction is [pyruvate, water dikinase] + ADP = [pyruvate, water dikinase]-phosphate + AMP + H(+). It catalyses the reaction [pyruvate, water dikinase]-phosphate + phosphate + H(+) = [pyruvate, water dikinase] + diphosphate. Bifunctional serine/threonine kinase and phosphorylase involved in the regulation of the phosphoenolpyruvate synthase (PEPS) by catalyzing its phosphorylation/dephosphorylation. The sequence is that of Phosphoenolpyruvate synthase regulatory protein from Escherichia coli O6:K15:H31 (strain 536 / UPEC).